We begin with the raw amino-acid sequence, 574 residues long: Ankyrin repeat protein B18 (574 aa).

6 ANK repeats span residues 56–87, 135–164, 167–213, 217–249, 253–285, and 327–356; these read TGYT…NVTM, IKSR…DPNF, DGYT…NLNA, CGNT…NFKI, HGLT…NVGE, and EGKT…DINA. The F-box domain maps to 541-574; the sequence is NCLLTLLPSEIIYEILYMLTINDLYNISYPPTKV.

In Homo sapiens (Human), this protein is Ankyrin repeat protein B18.